The sequence spans 483 residues: O-acetyltransferase pboB (483 aa).

Belongs to the fumigaclavine B O-acetyltransferase family. In terms of assembly, monomer.

It participates in secondary metabolite biosynthesis. Functionally, O-acetyltransferase; part of the gene cluster that mediates the biosynthesis of protubonine B, a hydroxylated and diacetylated cyclo-L-Trp-L-Leu derivative. Within the pathway, pboB catalyzes the acetylation of protubonine C at N-1 of the indoline ring to produce protubonine B. The first step of the protubonine B synthesis is performed by the nonribosomal peptide synthetase pboA that catalyzes the formation of cyclo-L-Trp-L-Leu by condensing L-Leu with L-Trp. The flavin-dependent monooxygenase pboD is responsible for hydroxylation at C-3 of the indole ring and subsequent formation of the pyrrolidine ring, leadind to protubonine D. Protubonine D is further diacetylated by two acetyltransferases, pboB and pboC, to form the final product protubonine B via protubonine C. The chain is O-acetyltransferase pboB from Aspergillus ustus.